A 496-amino-acid chain; its full sequence is Fizzy-related protein homolog (496 aa).

Disordered stretches follow at residues 28–51, 64–88, and 105–166; these read RRTL…FIPS, INEN…GKDG, and EKVQ…SPRK. At Thr32 the chain carries Phosphothreonine. Over residues 32–42 the composition is skewed to polar residues; the sequence is TPASSPVSSPS. Ser36 is modified (phosphoserine). Positions 47 to 52 are involved in APC/FZR1 E3 ubiquitin-protein ligase complex activity; sequence RFIPSR. Position 69 is an N6-acetyllysine (Lys69). Basic and acidic residues-rich tracts occupy residues 76–86 and 106–126; these read KAKDATSDNGK and KVQD…EKKG. Ser133, Ser138, Ser146, and Ser151 each carry phosphoserine. Over residues 146–160 the composition is skewed to polar residues; the sequence is SPYSLSPVSNKSQKL. Position 159 is an N6-acetyllysine (Lys159). WD repeat units lie at residues 182 to 222, 227 to 266, 269 to 306, 311 to 350, 353 to 395, 397 to 438, and 441 to 480; these read PELQ…VTRL, VEGD…KLSM, GHTA…LQSE, GHRQ…PVQQ, EHLA…PLQC, DTGS…QVAK, and GHSY…RSTK.

It belongs to the WD repeat CDC20/Fizzy family. The unphosphorylated form interacts with APC/C during mitosis. Interacts with NINL. Interacts (in complex with the anaphase promoting complex APC) with MAD2L2; inhibits FZR1-mediated APC/C activation. Interacts with SIRT2 and USP37. Interacts (via WD repeats) with MAK. Interacts with RBBP8/CtIP; this interaction leads to RBBP8 proteasomal degradation. Interacts with HECW2. Interacts with SASS6; the interaction is regulated by CENATAC and leads to SASS6 proteasomal degradation. Interacts (via N-terminus) with CCNF. Interacts with CDC6. Interacts with TK1 (via the KEN box). Acetylated. Deacetylated by SIRT2 at Lys-69 and Lys-159; deacetylation enhances the interaction of FZR1 with CDC27, leading to activation of anaphase promoting complex/cyclosome (APC/C). In terms of processing, following DNA damage, it is dephosphorylated by CDC14B in G2 phase, leading to its reassociation with the APC/C, and allowing an efficient G2 DNA damage checkpoint. Phosphorylated by MAK. Post-translationally, ubiquitinated by the SCF(CCNF) E3 ubiquitin-protein ligase complex; leading to its degradation by the proteasome. As to expression, isoform 2 is expressed at high levels in heart, liver, spleen and some cancer cell lines whereas isoform 3 is expressed only at low levels in these tissues.

The protein resides in the nucleus. Its subcellular location is the cytoplasm. It participates in protein modification; protein ubiquitination. Functionally, substrate-specific adapter for the anaphase promoting complex/cyclosome (APC/C) E3 ubiquitin-protein ligase complex. Associates with the APC/C in late mitosis, in replacement of CDC20, and activates the APC/C during anaphase and telophase. The APC/C remains active in degrading substrates to ensure that positive regulators of the cell cycle do not accumulate prematurely. At the G1/S transition FZR1 is phosphorylated, leading to its dissociation from the APC/C. Following DNA damage, it is required for the G2 DNA damage checkpoint: its dephosphorylation and reassociation with the APC/C leads to the ubiquitination of PLK1, preventing entry into mitosis. Acts as an adapter for APC/C to target the DNA-end resection factor RBBP8/CtIP for ubiquitination and subsequent proteasomal degradation. Through the regulation of RBBP8/CtIP protein turnover, may play a role in DNA damage response, favoring DNA double-strand repair through error-prone non-homologous end joining (NHEJ) over error-free, RBBP8-mediated homologous recombination (HR). This is Fizzy-related protein homolog from Homo sapiens (Human).